The chain runs to 372 residues: MHNESPIIRRKSTRIYVGDVPIGDGAPIAVQSMTNTRTTDVAATVAQIKALENVGADIVRVSVPTMDAAEAFKLIKQQVSIPLVADIHFDYRIALKVAEYGVDCLRINPGNIGNEERIRSVVDCARDKNIPIRIGVNGGSLEKDLQMKYGEPTPEALVESAMRHVDILDRLNFDQFKVSVKASDVFLAVDSYRLLAKKIDQPLHLGITEAGGARAGAVKSAVGLGMLLAEGIGDTLRISLAANPVEEIKVGFDILKSLRIRSRGINFIACPSCSRQEFDVISTVNALEERLEDIITPMDVSIIGCVVNGPGEAEVSHLGLAGSNKKSAFYEDGKRQKERFDNEDLVNQLEAKIRAKAARMDESNRIDIKVQN.

The [4Fe-4S] cluster site is built by Cys-270, Cys-273, Cys-305, and Glu-312.

It belongs to the IspG family. [4Fe-4S] cluster is required as a cofactor.

It catalyses the reaction (2E)-4-hydroxy-3-methylbut-2-enyl diphosphate + oxidized [flavodoxin] + H2O + 2 H(+) = 2-C-methyl-D-erythritol 2,4-cyclic diphosphate + reduced [flavodoxin]. Its pathway is isoprenoid biosynthesis; isopentenyl diphosphate biosynthesis via DXP pathway; isopentenyl diphosphate from 1-deoxy-D-xylulose 5-phosphate: step 5/6. Converts 2C-methyl-D-erythritol 2,4-cyclodiphosphate (ME-2,4cPP) into 1-hydroxy-2-methyl-2-(E)-butenyl 4-diphosphate. This Vibrio vulnificus (strain CMCP6) protein is 4-hydroxy-3-methylbut-2-en-1-yl diphosphate synthase (flavodoxin).